Here is a 134-residue protein sequence, read N- to C-terminus: Ribonuclease VapC1 (134 aa).

Positions 3 to 132 (YMLDTNIIIY…RITDLQWQDW (130 aa)) constitute a PINc domain. Residues Asp-6 and Asp-99 each contribute to the Mg(2+) site.

The protein belongs to the PINc/VapC protein family. It depends on Mg(2+) as a cofactor.

Its function is as follows. Toxic component of a type II toxin-antitoxin (TA) system. Acts as an RNase, its toxic effect is neutralized by VapB1 antitoxin. The chain is Ribonuclease VapC1 from Haemophilus influenzae (strain ATCC 51907 / DSM 11121 / KW20 / Rd).